The primary structure comprises 474 residues: GTPase Der (474 aa).

EngA-type G domains are found at residues Leu-3–Arg-167 and Ile-204–Asn-379. GTP contacts are provided by residues Gly-9–Ser-16, Asp-56–Leu-60, Asn-119–Glu-122, Gly-210–Ser-217, Asp-257–Leu-261, and Asn-322–Asp-325. The region spanning Arg-380 to Asp-464 is the KH-like domain.

Belongs to the TRAFAC class TrmE-Era-EngA-EngB-Septin-like GTPase superfamily. EngA (Der) GTPase family. As to quaternary structure, associates with the 50S ribosomal subunit.

Its function is as follows. GTPase that plays an essential role in the late steps of ribosome biogenesis. The sequence is that of GTPase Der from Bartonella tribocorum (strain CIP 105476 / IBS 506).